A 618-amino-acid chain; its full sequence is Transport protein particle subunit trs85-2 (618 aa).

The protein belongs to the TRS85 family. As to quaternary structure, part of the multisubunit TRAPP (transport protein particle) complexes I and II.

It localises to the golgi apparatus. It is found in the cis-Golgi network. Component of the TRAPP I and TRAPP II complexes. TRAPP I plays a key role in the late stages of endoplasmic reticulum to Golgi traffic. TRAPP II seems to play a role in intra-Golgi transport. Has a role late in meiosis following DNA replication. The protein is Transport protein particle subunit trs85-2 (trs85-2) of Schizosaccharomyces pombe (strain 972 / ATCC 24843) (Fission yeast).